Reading from the N-terminus, the 93-residue chain is uncharacterized protein (93 aa).

The first 22 residues, 1 to 22, serve as a signal peptide directing secretion; that stretch reads MSIPNLSSVTQLLSIATGLVST. A glycan (N-linked (GlcNAc...) asparagine; by host) is linked at Asn5.

This is an uncharacterized protein from Invertebrate iridescent virus 6 (IIV-6).